A 67-amino-acid chain; its full sequence is Light-harvesting protein B-870 alpha chain (67 aa).

The Cytoplasmic portion of the chain corresponds to 1–12; sequence MWRIWRLFDPMR. Residues 13 to 33 traverse the membrane as a helical segment; the sequence is AMVAQAVFLLGLAVLIHLMLL. Histidine 29 provides a ligand contact to a bacteriochlorophyll. The Periplasmic segment spans residues 34–67; the sequence is GTNKYNWLDGAKKAPVATAVAPVPAEVTSLAQAK.

The protein belongs to the antenna complex alpha subunit family. As to quaternary structure, an alpha/beta heterodimer. The core complex is formed by different alpha and beta chains, binding bacteriochlorophyll molecules, and arranged most probably in tetrameric structures disposed around the reaction center. The non-pigmented gamma chains may constitute additional components.

Its subcellular location is the cell inner membrane. Its function is as follows. Antenna complexes are light-harvesting systems, which transfer the excitation energy to the reaction centers. The sequence is that of Light-harvesting protein B-870 alpha chain (pufA) from Rubrivivax gelatinosus (strain NBRC 100245 / IL144).